The primary structure comprises 624 residues: Steryl-sulfatase (624 aa).

Residues 1–22 (MPRPRPLLLAVMAATLADIILA) form the signal peptide. At 24-192 (DPAPAGPAPR…GTVFGPALRV (169 aa)) the chain is on the lumenal side. Residues D43 and D44 each contribute to the Ca(2+) site. Residue N55 is glycosylated (N-linked (GlcNAc...) asparagine). C83 is a Ca(2+) binding site. The active-site Nucleophile is C83. The residue at position 83 (C83) is a 3-oxoalanine (Cys). H144 is an active-site residue. Cystine bridges form between C149–C156 and C178–C250. The chain crosses the membrane as a helical span at residues 193–216 (FAAGPLAALGASLAAMAAARWAGL). At 217 to 220 (ARVP) the chain is on the cytoplasmic side. A helical transmembrane segment spans residues 221–242 (GWALAGTAAAMLAVGGPRSASC). The Lumenal portion of the chain corresponds to 243–624 (LGFRPANCFL…ATTRTQATPR (382 aa)). Residues D350 and H351 each coordinate Ca(2+). 2 disulfide bridges follow: C454–C495 and C487–C493. N465 is a glycosylation site (N-linked (GlcNAc...) asparagine). The disordered stretch occupies residues 572 to 624 (GGAGGGAGAQDDSGHAHGDGSHAHDDPGHAQDRGDDDAHYGGHATTRTQATPR). Residues 583–611 (DSGHAHGDGSHAHDDPGHAQDRGDDDAHY) show a composition bias toward basic and acidic residues.

It belongs to the sulfatase family. Homodimer. It depends on Ca(2+) as a cofactor. The conversion to 3-oxoalanine (also known as C-formylglycine, FGly), of a serine or cysteine residue in prokaryotes and of a cysteine residue in eukaryotes, is critical for catalytic activity.

The protein localises to the microsome membrane. The protein resides in the endoplasmic reticulum membrane. The catalysed reaction is dehydroepiandrosterone 3-sulfate + H2O = 3beta-hydroxyandrost-5-en-17-one + sulfate + H(+). It carries out the reaction estrone 3-sulfate + H2O = estrone + sulfate + H(+). Functionally, catalyzes the conversion of sulfated steroid precursors, such as dehydroepiandrosterone sulfate (DHEA-S) and estrone sulfate to the free steroid. This Mus musculus (Mouse) protein is Steryl-sulfatase (Sts).